The sequence spans 282 residues: Protein N-terminal and lysine N-methyltransferase efm7 (282 aa).

The span at 1 to 13 (MSKPEEVVNHVPE) shows a compositional bias: basic and acidic residues. Positions 1-32 (MSKPEEVVNHVPEDEGSDIEAGGLFEDPPDFY) are disordered. Residues Trp67, 93-95 (GAA), Asp115, Trp152, and Ala179 contribute to the S-adenosyl-L-methionine site.

Belongs to the class I-like SAM-binding methyltransferase superfamily. EFM7 family.

The protein resides in the cytoplasm. In terms of biological role, S-adenosyl-L-methionine-dependent protein methyltransferase that trimethylates the N-terminal glycine 'Gly-2' of elongation factor 1-alpha, before also catalyzing the mono- and dimethylation of 'Lys-3'. This is Protein N-terminal and lysine N-methyltransferase efm7 (nnt-1) from Neurospora crassa (strain ATCC 24698 / 74-OR23-1A / CBS 708.71 / DSM 1257 / FGSC 987).